The primary structure comprises 341 residues: Phosphate acyltransferase (341 aa).

Belongs to the PlsX family. Homodimer. Probably interacts with PlsY.

It is found in the cytoplasm. It catalyses the reaction a fatty acyl-[ACP] + phosphate = an acyl phosphate + holo-[ACP]. Its pathway is lipid metabolism; phospholipid metabolism. In terms of biological role, catalyzes the reversible formation of acyl-phosphate (acyl-PO(4)) from acyl-[acyl-carrier-protein] (acyl-ACP). This enzyme utilizes acyl-ACP as fatty acyl donor, but not acyl-CoA. The protein is Phosphate acyltransferase of Vibrio cholerae serotype O1 (strain ATCC 39541 / Classical Ogawa 395 / O395).